Here is a 69-residue protein sequence, read N- to C-terminus: DNA-directed RNA polymerase subunit omega (69 aa).

This sequence belongs to the RNA polymerase subunit omega family. The RNAP catalytic core consists of 2 alpha, 1 beta, 1 beta' and 1 omega subunit. When a sigma factor is associated with the core the holoenzyme is formed, which can initiate transcription.

It carries out the reaction RNA(n) + a ribonucleoside 5'-triphosphate = RNA(n+1) + diphosphate. Functionally, promotes RNA polymerase assembly. Latches the N- and C-terminal regions of the beta' subunit thereby facilitating its interaction with the beta and alpha subunits. This is DNA-directed RNA polymerase subunit omega from Pelotomaculum thermopropionicum (strain DSM 13744 / JCM 10971 / SI).